Consider the following 322-residue polypeptide: Endochitinase (322 aa).

The first 21 residues, methionine 1–alanine 21, serve as a signal peptide directing secretion. The region spanning glutamate 22–glycine 62 is the Chitin-binding type-1 domain. Disulfide bonds link cysteine 24–cysteine 39, cysteine 33–cysteine 45, cysteine 38–cysteine 52, and cysteine 56–cysteine 60.

It belongs to the glycosyl hydrolase 19 family. Chitinase class I subfamily.

The catalysed reaction is Random endo-hydrolysis of N-acetyl-beta-D-glucosaminide (1-&gt;4)-beta-linkages in chitin and chitodextrins.. Functionally, defense against chitin-containing fungal pathogens. The protein is Endochitinase of Actinidia chinensis var. chinensis (Chinese soft-hair kiwi).